The chain runs to 558 residues: N-terminal histidine N-methyltransferase (558 aa).

Topologically, residues 1-15 (MAPFRSIYEKDATKK) are cytoplasmic. Residues 16–32 (LVVGAALLVLAAFYSYV) form a helical membrane-spanning segment. Over 33-49 (FLLTLAPVYGSTPSHIF) the chain is Lumenal. Residues 50 to 65 (HGYGVGIAGVAGWFSK) traverse the membrane as a helical segment. Residues 66–77 (DIVDRVSGRKAI) are Cytoplasmic-facing. The chain crosses the membrane as a helical span at residues 78 to 96 (YAIPVLAFFLPVVQYFVSQ). Residues 97–104 (QSSALGNP) are Lumenal-facing. The helical transmembrane segment at 105-131 (AGPIFTEVLALYPLVLLSVACAGKLVQ) threads the bilayer. Residues 132-145 (AGLNLQRHGDLVAE) lie on the Cytoplasmic side of the membrane. A helical membrane pass occupies residues 146–169 (HIPLLGSYVIYSAGEHLIKAFLSR). The Lumenal portion of the chain corresponds to 170 to 172 (FIG). A helical membrane pass occupies residues 173–194 (STVLLSRAGLQILIAIFYAAAV). Over 195 to 197 (PSK) the chain is Cytoplasmic. A helical transmembrane segment spans residues 198 to 215 (ALLLAIPAFLFSVTSNTH). The Lumenal portion of the chain corresponds to 216-558 (LPLGHTTTAL…VLPDRVWEGW (343 aa)).

It belongs to the methyltransferase superfamily.

It localises to the endoplasmic reticulum membrane. It carries out the reaction L-histidyl-[protein] + S-adenosyl-L-methionine = N(tele)-methyl-L-histidyl-[protein] + S-adenosyl-L-homocysteine + H(+). In terms of biological role, protein-histidine N-methyltransferase that specifically mediates 3-methylhistidine (tele-methylhistidine) methylation at 'His-1', which protects the side-chain from oxidative damage. Methylates lytic polysaccharide monooxygenases (LPMOs) destined for secretion, including AN4702. In Emericella nidulans (strain FGSC A4 / ATCC 38163 / CBS 112.46 / NRRL 194 / M139) (Aspergillus nidulans), this protein is N-terminal histidine N-methyltransferase.